The sequence spans 397 residues: tRNA (guanine-N(7)-)-methyltransferase non-catalytic subunit wuho (397 aa).

WD repeat units follow at residues 75–115 (KVEV…AQLL), 163–202 (GHLS…DIHS), 206–244 (GHKE…ELLL), and 303–343 (AGTW…RASG).

It belongs to the WD repeat TRM82 family. As to quaternary structure, forms a heterodimer with the catalytic subunit Mettl1. Interacts with mei-P26 and weakly interacts with bgcn; required for the function or formation of the mei-P26-bgcn-bam-sxl complex. Interacts with nanos; may be involved in mei-P26-dependent derepression of the BMP signaling pathway. Interacts with Myc; the interaction may be mediated by mei-P26 and may be involved in the regulation of ribosome biogenesis. In terms of tissue distribution, in testis, it is present at high level in hub cells, a niche for germline stem cells of testis. Ubiquitously expressed in all testicular cells throughout spermatogenesis. Ubiquitously expressed in all germline and somatic cells of the ovary.

Its subcellular location is the nucleus. It localises to the cytoplasm. The protein operates within tRNA modification; N(7)-methylguanine-tRNA biosynthesis. Its function is as follows. Required for the Mettl1-dependent formation of N(7)-methylguanine at position 46 (m7G46) in tRNA. In the Mettl1-wuho methyltransferase complex, it is required to stabilize and induce conformational changes of the catalytic subunit. Required for binding of nanos mRNA and repression of translation by the mei-P26-bgcn-bam-sxl complex. May cooperate with mei-P26 and nanos to derepress the BMP signaling pathway. May cooperate with mei-P26 to suppress expression of a subset of microRNAs. May cooperate with mei-P26 to regulate bam expression levels in germline cells during gametogenesis. Required to promote mitosis to meiosis transition during gametogenesis. May regulate germline cell division in part by regulating ribosome biogenesis. The protein is tRNA (guanine-N(7)-)-methyltransferase non-catalytic subunit wuho of Drosophila persimilis (Fruit fly).